The chain runs to 368 residues: Transmembrane protein 26 (368 aa).

3 consecutive transmembrane segments (helical) span residues 4–24, 36–56, and 65–85; these read LVFL…LVGV, YWLL…TLKF, and FSPA…LLEL. Asn110 carries N-linked (GlcNAc...) asparagine glycosylation. Transmembrane regions (helical) follow at residues 150–170, 177–197, 208–228, 257–277, and 281–301; these read QTFL…GGIT, LLLM…ETLE, VYAI…DLAV, IGIS…ILMT, and VINQ…VLQL. Residues 324–368 are disordered; that stretch reads GEHGCRAQTSESGPSQRDWQNESKEGLAIPLRGSPVTSDDSHHTP. Over residues 330–341 the composition is skewed to polar residues; sequence AQTSESGPSQRD.

Its subcellular location is the membrane. The sequence is that of Transmembrane protein 26 (TMEM26) from Homo sapiens (Human).